Here is a 557-residue protein sequence, read N- to C-terminus: Potassium-transporting ATPase potassium-binding subunit (557 aa).

10 helical membrane passes run 4-24, 61-81, 131-151, 174-194, 253-273, 280-300, 375-395, 412-432, 483-503, and 528-548; these read LGAG…VHVP, TYAL…YAFL, GLTV…VALV, LRVL…TGVV, LEVF…GTLV, LAVL…TTWA, GLYG…LMVG, CAAL…AVAL, LAIW…AGAF, and LAVV…LGPI.

This sequence belongs to the KdpA family. In terms of assembly, the system is composed of three essential subunits: KdpA, KdpB and KdpC.

The protein resides in the cell membrane. Part of the high-affinity ATP-driven potassium transport (or Kdp) system, which catalyzes the hydrolysis of ATP coupled with the electrogenic transport of potassium into the cytoplasm. This subunit binds the extracellular potassium ions and delivers the ions to the membrane domain of KdpB through an intramembrane tunnel. The protein is Potassium-transporting ATPase potassium-binding subunit of Kineococcus radiotolerans (strain ATCC BAA-149 / DSM 14245 / SRS30216).